We begin with the raw amino-acid sequence, 103 residues long: Large ribosomal subunit protein bL21 (103 aa).

It belongs to the bacterial ribosomal protein bL21 family. Part of the 50S ribosomal subunit. Contacts protein L20.

Its function is as follows. This protein binds to 23S rRNA in the presence of protein L20. In Mannheimia succiniciproducens (strain KCTC 0769BP / MBEL55E), this protein is Large ribosomal subunit protein bL21.